Reading from the N-terminus, the 1222-residue chain is A disintegrin and metalloproteinase with thrombospondin motifs 16 (1222 aa).

Positions 1 to 20 are cleaved as a signal peptide; that stretch reads MESRGCAALWVLLLAQVSEQ. Residues 21–277 constitute a propeptide that is removed on maturation; the sequence is QTPACALGLA…EYKPSSRHKR (257 aa). N-linked (GlcNAc...) asparagine glycans are attached at residues N154 and N190. The short motif at 245 to 253 is the Cysteine switch element; sequence HFCGRRKKY. C247 contacts Zn(2+). The Peptidase M12B domain maps to 288–493; it reads LNVETLVVVD…AQAICLADQP (206 aa). N308 carries an N-linked (GlcNAc...) asparagine glycan. Cystine bridges form between C364–C415, C390–C397, C409–C488, C448–C472, C516–C541, C527–C548, C536–C567, C561–C572, C596–C633, C600–C638, and C611–C623. H431 is a Zn(2+) binding site. E432 is a catalytic residue. Zn(2+) contacts are provided by H435 and H441. Residues 494-583 form the Disintegrin domain; sequence KPVKEYKYPE…KYGDEGPKPT (90 aa). Positions 584–639 constitute a TSP type-1 1 domain; that stretch reads HGHWSDWSPWSPCSRTCGGGISHRDRLCTNPRPSHGGKFCQGSTRTLKLCNSQRCP. 6 N-linked (GlcNAc...) asparagine glycosylation sites follow: N739, N778, N825, N833, N903, and N933. The tract at residues 745–871 is spacer; that stretch reads THRGLYSKHH…KTPAAQPSYS (127 aa). TSP type-1 domains are found at residues 872–920, 925–985, 986–1046, 1049–1113, and 1125–1179; these read WAIV…LVPC, CPSS…QSCP, PAWS…KRCH, KKLQ…IPCP, and RGSW…HFCP. The region spanning 1184-1221 is the PLAC domain; that stretch reads RGTFCKDLFHWCYLVPQHGMCGHRFYSKQCCNTCSKSN.

It depends on Zn(2+) as a cofactor. In terms of processing, the precursor is cleaved by a furin endopeptidase. Glycosylated. Can be O-fucosylated by POFUT2 on a serine or a threonine residue found within the consensus sequence C1-X(2)-(S/T)-C2-G of the TSP type-1 repeat domains where C1 and C2 are the first and second cysteine residue of the repeat, respectively. Fucosylated repeats can then be further glycosylated by the addition of a beta-1,3-glucose residue by the glucosyltransferase, B3GALTL. Fucosylation mediates the efficient secretion of ADAMTS family members. Can also be C-glycosylated with one or two mannose molecules on tryptophan residues within the consensus sequence W-X-X-W of the TPRs, and N-glycosylated. These other glycosylations can also facilitate secretion.

Its subcellular location is the secreted. The protein resides in the extracellular space. The protein localises to the extracellular matrix. The sequence is that of A disintegrin and metalloproteinase with thrombospondin motifs 16 (Adamts16) from Mus musculus (Mouse).